Here is a 3298-residue protein sequence, read N- to C-terminus: Protocadherin-16 (3298 aa).

A signal peptide spans 1 to 42; the sequence is MQKELGIVPSCPGMKSPRPHLLLPLLLLLLLLLGAGVPGAWG. 27 Cadherin domains span residues 43 to 143, 144 to 255, 256 to 362, 367 to 472, 474 to 578, 579 to 685, 686 to 790, 791 to 894, 895 to 1000, 1001 to 1111, 1112 to 1211, 1218 to 1324, 1333 to 1436, 1437 to 1546, 1547 to 1649, 1650 to 1751, 1752 to 1855, 1856 to 1960, 1965 to 2068, 2069 to 2171, 2172 to 2277, 2278 to 2376, 2377 to 2482, 2483 to 2602, 2603 to 2706, 2707 to 2813, and 2814 to 2933; these read QAGS…APAF, PQAR…APAF, NQSR…QPSM, LSAD…APAF, RQLY…EPQF, QRTF…PPQF, YPRE…PPIF, EQLQ…SPAF, PAPE…APRF, NSPT…DPTF, LAVA…SPTF, AGGG…PPDL, VPVV…APAF, ARDP…APVF, ASPS…APTF, QQQE…APTF, GSAH…APAF, PVPA…APTF, LRLR…GPRF, PRAS…APRF, LRPH…RPTI, PQPW…APAF, SQSL…APSF, TLSH…PPVF, TRAS…GPAF, PLNL…DPVF, and LAPA…APDL. Residues 43–2940 are Extracellular-facing; that stretch reads QAGSLDLQID…PDLNLLLVGA (2898 aa). N-linked (GlcNAc...) asparagine glycans are attached at residues Asn-217, Asn-256, and Asn-402. N-linked (GlcNAc...) asparagine glycosylation is present at Asn-584. Asn-1249 is a glycosylation site (N-linked (GlcNAc...) asparagine). Residue Asn-1521 is glycosylated (N-linked (GlcNAc...) asparagine). Residue Asn-1718 is glycosylated (N-linked (GlcNAc...) asparagine). The N-linked (GlcNAc...) asparagine glycan is linked to Asn-1996. Positions 2065-2094 are disordered; sequence GPRFPRASSEATIRENAPPGTPIVSPRAVH. N-linked (GlcNAc...) asparagine glycans are attached at residues Asn-2361, Asn-2428, and Asn-2569. N-linked (GlcNAc...) asparagine glycans are attached at residues Asn-2761, Asn-2792, and Asn-2862. A helical membrane pass occupies residues 2941 to 2961; it reads VAASLGVVVVLALAALVLGLV. Residues 2962-3298 are Cytoplasmic-facing; sequence RARSRKAEAA…EPPDDTELHI (337 aa). Residues 2986–3040 form a disordered region; the sequence is LQKLGREPPSPPPSEHLYHQTLPSYGGPGAGGPYPRGGSLDPSHSSGRGSAEAAE. Gly residues predominate over residues 3011–3020; that stretch reads GGPGAGGPYP. Ser-3055 is modified (phosphoserine). Disordered stretches follow at residues 3062-3082 and 3233-3298; these read ARGPDSGIQQDADGLSDTSCE and ASHR…ELHI. Composition is skewed to low complexity over residues 3244–3266 and 3276–3289; these read SLSSAAMSPSFSPSLSPLAARSP and GPSASALSAESGLE.

Heterophilic interaction with FAT4; this interaction affects their respective protein levels. As to expression, expressed in fibroblasts but not in melanocytes or keratinocytes.

It localises to the cell membrane. Calcium-dependent cell-adhesion protein. Mediates functions in neuroprogenitor cell proliferation and differentiation. In the heart, has a critical role for proper morphogenesis of the mitral valve, acting in the regulation of cell migration involved in valve formation. The protein is Protocadherin-16 (DCHS1) of Homo sapiens (Human).